Reading from the N-terminus, the 129-residue chain is MKFIIALAALIAVACALPVSNDNFRHEFDHMIVNTATQRFHEIEKFLLHITHEVDDLEKTGNKDEKARLLRELTVSEAFIEGSRGYFQRELKRTDLDLLEKFNFEAALATGDLLLKDLKALQKRVQDSE.

A signal peptide spans 1–16; that stretch reads MKFIIALAALIAVACA.

It belongs to the mite group 5 allergen family. In terms of assembly, may exist as homodimer and homotrimer. In terms of tissue distribution, midgut and hindgut contents as well as fecal pellets (at protein level).

The sequence is that of Mite allergen Blo t 21 from Blomia tropicalis (Mite).